We begin with the raw amino-acid sequence, 283 residues long: 4-diphosphocytidyl-2-C-methyl-D-erythritol kinase (283 aa).

K10 is an active-site residue. 99–109 (PMGGGLGGGSS) serves as a coordination point for ATP. Residue D141 is part of the active site.

This sequence belongs to the GHMP kinase family. IspE subfamily. Homodimer.

The catalysed reaction is 4-CDP-2-C-methyl-D-erythritol + ATP = 4-CDP-2-C-methyl-D-erythritol 2-phosphate + ADP + H(+). The protein operates within isoprenoid biosynthesis; isopentenyl diphosphate biosynthesis via DXP pathway; isopentenyl diphosphate from 1-deoxy-D-xylulose 5-phosphate: step 3/6. Its function is as follows. Catalyzes the phosphorylation of the position 2 hydroxy group of 4-diphosphocytidyl-2C-methyl-D-erythritol. This is 4-diphosphocytidyl-2-C-methyl-D-erythritol kinase from Shigella dysenteriae serotype 1 (strain Sd197).